A 930-amino-acid chain; its full sequence is Dual serine/threonine and tyrosine protein kinase (930 aa).

The segment covering 1-14 (MEGDGVPWGSEPVS) has biased composition (low complexity). The tract at residues 1–22 (MEGDGVPWGSEPVSGPGPGGGG) is disordered. 2 coiled-coil regions span residues 190–216 (EEDL…MHHA) and 396–432 (RKKE…KEEL). Residues 653–907 (PKLGQELGRG…PLLGIVQPML (255 aa)) form the Protein kinase domain. ATP-binding positions include 659-667 (LGRGQYGVV) and lysine 682. The active-site Proton acceptor is the aspartate 778.

It belongs to the protein kinase superfamily. Ser/Thr protein kinase family.

Its subcellular location is the cytoplasm. The protein resides in the cell membrane. It localises to the apical cell membrane. The protein localises to the basolateral cell membrane. It is found in the cell junction. The catalysed reaction is L-seryl-[protein] + ATP = O-phospho-L-seryl-[protein] + ADP + H(+). It catalyses the reaction L-threonyl-[protein] + ATP = O-phospho-L-threonyl-[protein] + ADP + H(+). The enzyme catalyses L-tyrosyl-[protein] + ATP = O-phospho-L-tyrosyl-[protein] + ADP + H(+). In terms of biological role, acts as a positive regulator of ERK phosphorylation downstream of fibroblast growth factor-receptor activation. Involved in the regulation of both caspase-dependent apoptosis and caspase-independent cell death. In the skin, it plays a predominant role in suppressing caspase-dependent apoptosis in response to UV stress in a range of dermal cell types. The sequence is that of Dual serine/threonine and tyrosine protein kinase (DSTYK) from Pan troglodytes (Chimpanzee).